A 137-amino-acid polypeptide reads, in one-letter code: Putative nickel-responsive regulator (137 aa).

Residues His-78, His-89, His-91, and Cys-97 each contribute to the Ni(2+) site.

This sequence belongs to the transcriptional regulatory CopG/NikR family. Ni(2+) is required as a cofactor.

Its function is as follows. Transcriptional regulator. The polypeptide is Putative nickel-responsive regulator (Syntrophus aciditrophicus (strain SB)).